The chain runs to 353 residues: Photosystem II protein D1 (353 aa).

T2 carries the N-acetylthreonine modification. The residue at position 2 (T2) is a Phosphothreonine. A run of 3 helical transmembrane segments spans residues 29-46 (YIGWFGVLMIPTLLTATS), 118-133 (HFLLGVACYMGREWEL), and 142-156 (WIAVAYSAPVAAATA). Residue H118 coordinates chlorophyll a. Y126 contacts pheophytin a. Residues D170 and E189 each contribute to the [CaMn4O5] cluster site. The helical transmembrane segment at 197–218 (FHMLGVAGVFGGSLFSAMHGSL) threads the bilayer. H198 is a chlorophyll a binding site. A quinone contacts are provided by residues H215 and 264 to 265 (SF). Residue H215 participates in Fe cation binding. H272 serves as a coordination point for Fe cation. A helical membrane pass occupies residues 274–288 (FLAAWPVVGIWFTAL). Positions 332, 333, 342, and 344 each coordinate [CaMn4O5] cluster. A propeptide spanning residues 345 to 353 (AVEVPAING) is cleaved from the precursor.

The protein belongs to the reaction center PufL/M/PsbA/D family. In terms of assembly, PSII is composed of 1 copy each of membrane proteins PsbA, PsbB, PsbC, PsbD, PsbE, PsbF, PsbH, PsbI, PsbJ, PsbK, PsbL, PsbM, PsbT, PsbX, PsbY, PsbZ, Psb30/Ycf12, at least 3 peripheral proteins of the oxygen-evolving complex and a large number of cofactors. It forms dimeric complexes. Requires The D1/D2 heterodimer binds P680, chlorophylls that are the primary electron donor of PSII, and subsequent electron acceptors. It shares a non-heme iron and each subunit binds pheophytin, quinone, additional chlorophylls, carotenoids and lipids. D1 provides most of the ligands for the Mn4-Ca-O5 cluster of the oxygen-evolving complex (OEC). There is also a Cl(-1) ion associated with D1 and D2, which is required for oxygen evolution. The PSII complex binds additional chlorophylls, carotenoids and specific lipids. as cofactor. Post-translationally, tyr-161 forms a radical intermediate that is referred to as redox-active TyrZ, YZ or Y-Z. In terms of processing, C-terminally processed by CTPA; processing is essential to allow assembly of the oxygen-evolving complex and thus photosynthetic growth.

The protein localises to the plastid. The protein resides in the chloroplast thylakoid membrane. The enzyme catalyses 2 a plastoquinone + 4 hnu + 2 H2O = 2 a plastoquinol + O2. In terms of biological role, photosystem II (PSII) is a light-driven water:plastoquinone oxidoreductase that uses light energy to abstract electrons from H(2)O, generating O(2) and a proton gradient subsequently used for ATP formation. It consists of a core antenna complex that captures photons, and an electron transfer chain that converts photonic excitation into a charge separation. The D1/D2 (PsbA/PsbD) reaction center heterodimer binds P680, the primary electron donor of PSII as well as several subsequent electron acceptors. This Hordeum vulgare (Barley) protein is Photosystem II protein D1.